Here is a 581-residue protein sequence, read N- to C-terminus: Transcription activator GAGA (581 aa).

The BTB domain maps to 34–99; sequence VDCTLAAGGR…VYRGEVSVDH (66 aa). An interaction with E(bx) region spans residues 201–397; it reads VIQAFLPARK…SSGSGSGALS (197 aa). Position 237 is a phosphothreonine (Thr-237). Disordered stretches follow at residues 298–343 and 364–404; these read ITPA…EQPA and LRHF…SVPQ. The C2H2-type; degenerate zinc-finger motif lies at 343 to 366; the sequence is ATCPICYAVIRQSRNLRRHLELRH. Residues 381 to 401 show a composition bias toward low complexity; that stretch reads GKKSSSGSSGSGSGALSSSGS.

As to quaternary structure, interacts with Bin1, lolal, corto, ttk and ph-p. Interacts with FACT subunits Ssrp and dre4/SPT16. Interacts with E(bx). Upon ecdysone stimulation, interacts with Nup98. Post-translationally, the N-terminus is blocked. In terms of tissue distribution, expressed in the central nervous system throughout development.

It is found in the nucleus. The protein localises to the chromosome. Transcriptional activator that functions by regulating chromatin structure. Overcomes the repressive effects of chromatin by promoting the open chromatin conformation in promoter gene regions, thereby allowing access to other transcription factors. Binds to DNA Polycomb response elements (PREs) at the bithorax complex and to the proximal region of the engrailed promoter, and positively regulates transcription of many genes including homeotic ones. Involved in zygotic genome activation (ZGA), a critical event in early embryonic development during which the developmental control passes from maternally provided mRNAs to the expression of the zygotic genome after fertilization. Binds to the DNA sequence (GA)n, with optimal binding to the pentamer 5'-GAGAG-3'. Binds DNA as an oligomer. May also act as a transcriptional repressor, maintaining the repressed state of genes including lolal, and down-regulating its own transcription. Required for dosage compensation in males and may be involved in oogenesis. Also has a role in nuclear division. This is Transcription activator GAGA (Trl) from Drosophila melanogaster (Fruit fly).